A 460-amino-acid chain; its full sequence is Crocetin glucosyltransferase 2 (460 aa).

Histidine 19 (proton acceptor) is an active-site residue. Histidine 19 serves as a coordination point for an anthocyanidin. Positions 133, 333, 348, 351, 352, 353, 356, 372, and 373 each coordinate UDP-alpha-D-glucose.

The protein belongs to the UDP-glycosyltransferase family. In terms of tissue distribution, mainly expressed in fully developed stigmas.

The enzyme catalyses crocetin + UDP-alpha-D-glucose = beta-D-glucosyl crocetin + UDP. The catalysed reaction is beta-D-glucosyl crocetin + UDP-alpha-D-glucose = bis(beta-D-glucosyl) crocetin + UDP. It catalyses the reaction beta-D-gentiobiosyl crocetin + UDP-alpha-D-glucose = beta-D-gentiobiosyl beta-D-glucosyl crocetin + UDP. In terms of biological role, crocetin glucosyltransferase involved in the synthesis of crocin, one of the apocarotenoids responsible for the color and bitter taste of saffron. This chain is Crocetin glucosyltransferase 2 (GLT2), found in Crocus sativus (Saffron).